An 873-amino-acid chain; its full sequence is Ectonucleotide pyrophosphatase/phosphodiesterase family member 3 (873 aa).

At 1 to 11 (MESMLTLAMEQ) the chain is on the cytoplasmic side. The helical; Signal-anchor for type II membrane protein transmembrane segment at 12–30 (PVKRNTLKKYKIACIVLLA) threads the bilayer. The Extracellular portion of the chain corresponds to 31–873 (LLVIVSLGLG…TYLPTFETTI (843 aa)). 2 consecutive SMB domains span residues 51–93 (QGSC…VEST) and 94–138 (RIWM…GETS). 10 disulfide bridges follow: C54–C71, C58–C89, C69–C82, C75–C81, C98–C115, C103–C133, C113–C126, C119–C125, C144–C190, and C152–C364. Positions 78 to 80 (RGD) match the Cell attachment site motif. Positions 160–544 (PVILFSMDGF…HGSLNHLLKV (385 aa)) are phosphodiesterase. D167 contacts Zn(2+). K204 is a binding site for ATP. Residue T205 coordinates Zn(2+). T205 serves as the catalytic Nucleophile. Position 226 (N226) interacts with ATP. The N-linked (GlcNAc...) asparagine glycan is linked to N236. Position 275 (E275) interacts with ATP. N279 carries an N-linked (GlcNAc...) asparagine glycan. Y289 contacts ATP. N-linked (GlcNAc...) asparagine glycosylation is present at N290. Zn(2+) contacts are provided by D325, H329, D372, and H373. Disulfide bonds link C380–C477, C428–C816, C561–C621, C573–C677, C575–C662, and C785–C795. N-linked (GlcNAc...) asparagine glycosylation occurs at N425. Residue H482 participates in Zn(2+) binding. Residues N532, N592, N685, and N697 are each glycosylated (N-linked (GlcNAc...) asparagine). Positions 580–873 (NSIQLEQVNQ…TYLPTFETTI (294 aa)) are nuclease. Ca(2+)-binding residues include D750, N752, D754, H756, and D758. A glycan (N-linked (GlcNAc...) asparagine) is linked at N787.

Monomer and homodimer. The cofactor is Zn(2+). In terms of processing, N-glycosylated. N-glycosylation is necessary for normal transport to the cell membrane, but is not the apical targeting signal.

Its subcellular location is the cell membrane. It localises to the apical cell membrane. The protein resides in the secreted. It carries out the reaction a ribonucleoside 5'-triphosphate + H2O = a ribonucleoside 5'-phosphate + diphosphate + H(+). It catalyses the reaction ATP + H2O = AMP + diphosphate + H(+). The enzyme catalyses CTP + H2O = CMP + diphosphate + H(+). The catalysed reaction is GTP + H2O = GMP + diphosphate + H(+). It carries out the reaction UTP + H2O = UMP + diphosphate + H(+). It catalyses the reaction UDP-N-acetyl-alpha-D-glucosamine + H2O = N-acetyl-alpha-D-glucosamine 1-phosphate + UMP + 2 H(+). The enzyme catalyses P(1),P(3)-bis(5'-adenosyl) triphosphate + H2O = AMP + ADP + 2 H(+). The catalysed reaction is P(1),P(4)-bis(5'-adenosyl) tetraphosphate + H2O = AMP + ATP + 2 H(+). It carries out the reaction P(1),P(5)-bis(5'-adenosyl) pentaphosphate + H2O = adenosine 5'-tetraphosphate + AMP + 2 H(+). It catalyses the reaction P(1),P(4)-bis(5'-guanosyl) tetraphosphate + H2O = GMP + GTP + 2 H(+). The enzyme catalyses Hydrolytically removes 5'-nucleotides successively from the 3'-hydroxy termini of 3'-hydroxy-terminated oligonucleotides.. Functionally, hydrolase that metabolizes extracellular nucleotides, including ATP, GTP, UTP and CTP. Limits mast cells and basophils response during inflammation and during the chronic phases of allergic responses by eliminating extracellular ATP, a signaling molecule activating these cells in an autocrine manner. Metabolizes extracellular ATP in the lumen of the small intestine, and thereby prevents ATP-induced apoptosis of intestinal plasmacytoid dendritic cells. Has a broad specificity and can also hydrolyze UDP-GlcNAc into UMP and GlcNAc-1-phosphate and potentially several other intracellular nucleotide sugars, including UDP-GalNAc, CMP-NeuAc, GDP-Fuc, and UDP-GlcA. Thereby, could modulate glycan biosynthesis and protein glycosylation. Can hydrolyze extracellular dinucleoside polyphosphates, including the vasoactive adenosine polyphosphates as well. In addition, displays an alkaline phosphodiesterase activity in vitro. The sequence is that of Ectonucleotide pyrophosphatase/phosphodiesterase family member 3 from Pongo abelii (Sumatran orangutan).